A 492-amino-acid chain; its full sequence is UPF0236 protein TTE1650/TTE2708 (492 aa).

It belongs to the UPF0236 family.

This chain is UPF0236 protein TTE1650/TTE2708, found in Caldanaerobacter subterraneus subsp. tengcongensis (strain DSM 15242 / JCM 11007 / NBRC 100824 / MB4) (Thermoanaerobacter tengcongensis).